Consider the following 723-residue polypeptide: ADP-ribosylation factor-binding protein GGA3 (723 aa).

Residues 1-313 (MAEAEGESLE…GEVATLTLPD (313 aa)) are binds to ARF1 (in long isoform). Positions 16–146 (ATNPSNRQED…MLKRQGIVQS (131 aa)) constitute a VHS domain. A phosphoserine mark is found at Ser159 and Ser275. The region spanning 171–298 (DEEKSKLLAK…VINSYKTIIE (128 aa)) is the GAT domain. The interval 299–593 (GQVINGEVAT…IHVPLESIKP (295 aa)) is unstructured hinge. The interval 339–384 (SSVLAPAPTPPSSGIPILPPPPQASGPPRSRSSSQAEATLGPSSTS) is disordered. Residues 345–363 (APTPPSSGIPILPPPPQAS) are compositionally biased toward pro residues. Positions 364–374 (GPPRSRSSSQA) are enriched in low complexity. Positions 391–395 (DEELL) match the DXXLL motif. The interval 428 to 464 (DFFSPRPGTAACGASDAPLLQPSAPSSSSSQAPLPPP) is disordered. The segment covering 441-459 (ASDAPLLQPSAPSSSSSQA) has biased composition (low complexity). The GAE domain maps to 594–715 (SSALPVTAYD…TEVGEVDQFP (122 aa)).

The protein belongs to the GGA protein family. Monomer. Interacts with GGA1 and GGA2. Binds to clathrin and activated ARFs, such as ARF1, ARF5 and ARF6. Binds RABEP1 and RABGEF1. Interacts with the membrane proteins M6PR/CD-MPR and IGF2R/CI-MPR and the accessory proteins SYNRG, EPN4, NECAP1, NECAP2 and AFTPH/aftiphilin. Interacts with TSG101 and UBC. Interacts with ADRA2B. Interacts with NTRK1; the interaction is independent of NTRK1 activation and ubiquitination. Interacts (via VHS domain) with BACE1 (via DXXLL motif). Phosphorylated by CK2 and dephosphorylated by PP2A. Phosphorylation of GGA3 allows the internal DXXLL motif to bind the VHS domain and to inhibit the recognition of cargo signals. In terms of processing, ubiquitinated. Post-translationally, proteolytically cleaved during apoptosis by CASP3. Ubiquitously expressed.

It is found in the golgi apparatus. The protein localises to the trans-Golgi network membrane. It localises to the endosome membrane. The protein resides in the early endosome membrane. Its subcellular location is the recycling endosome membrane. In terms of biological role, plays a role in protein sorting and trafficking between the trans-Golgi network (TGN) and endosomes. Mediates the ARF-dependent recruitment of clathrin to the TGN and binds ubiquitinated proteins and membrane cargo molecules with a cytosolic acidic cluster-dileucine (DXXLL) motif. Mediates export of the GPCR receptor ADRA2B to the cell surface. nvolved in BACE1 transport and sorting as well as regulation of BACE1 protein levels. Regulates retrograde transport of BACE1 from endosomes to the trans-Golgi network via interaction through the VHS motif and dependent of BACE1 phosphorylation. Modulates BACE1 protein levels independently of the interaction between VHS domain and DXXLL motif through recognition of ubiquitination. Key player in a novel DXXLL-mediated endosomal sorting machinery to the recycling pathway that targets NTRK1 to the plasma membrane. This Homo sapiens (Human) protein is ADP-ribosylation factor-binding protein GGA3.